The following is a 160-amino-acid chain: Ribosomal RNA large subunit methyltransferase H (160 aa).

Residues leucine 76 and glycine 108 each contribute to the S-adenosyl-L-methionine site.

This sequence belongs to the RNA methyltransferase RlmH family. Homodimer.

The protein resides in the cytoplasm. It catalyses the reaction pseudouridine(1915) in 23S rRNA + S-adenosyl-L-methionine = N(3)-methylpseudouridine(1915) in 23S rRNA + S-adenosyl-L-homocysteine + H(+). Specifically methylates the pseudouridine at position 1915 (m3Psi1915) in 23S rRNA. This chain is Ribosomal RNA large subunit methyltransferase H, found in Bradyrhizobium diazoefficiens (strain JCM 10833 / BCRC 13528 / IAM 13628 / NBRC 14792 / USDA 110).